We begin with the raw amino-acid sequence, 150 residues long: Large ribosomal subunit protein bL9 (150 aa).

It belongs to the bacterial ribosomal protein bL9 family.

Its function is as follows. Binds to the 23S rRNA. In Paracidovorax citrulli (strain AAC00-1) (Acidovorax citrulli), this protein is Large ribosomal subunit protein bL9.